Reading from the N-terminus, the 438-residue chain is Methylenetetrahydrofolate--tRNA-(uracil-5-)-methyltransferase TrmFO (438 aa).

7 to 12 (GAGLAG) is a binding site for FAD.

Belongs to the MnmG family. TrmFO subfamily. It depends on FAD as a cofactor.

It is found in the cytoplasm. The catalysed reaction is uridine(54) in tRNA + (6R)-5,10-methylene-5,6,7,8-tetrahydrofolate + NADH + H(+) = 5-methyluridine(54) in tRNA + (6S)-5,6,7,8-tetrahydrofolate + NAD(+). It catalyses the reaction uridine(54) in tRNA + (6R)-5,10-methylene-5,6,7,8-tetrahydrofolate + NADPH + H(+) = 5-methyluridine(54) in tRNA + (6S)-5,6,7,8-tetrahydrofolate + NADP(+). Functionally, catalyzes the folate-dependent formation of 5-methyl-uridine at position 54 (M-5-U54) in all tRNAs. In Sulfurihydrogenibium sp. (strain YO3AOP1), this protein is Methylenetetrahydrofolate--tRNA-(uracil-5-)-methyltransferase TrmFO.